The chain runs to 322 residues: MKVLSLLAAASAASAHTIFVQLEADGTTYPVSYGIRTPSYDGPITDVTSNDLACNGGPNPTTPSDKIITVNAGSTVKAIWRHTLTSGADDVMDASHKGPTLAYLKKVDDALTDTGIGGGWFKIQEDGYNNGQWGTSTVITNGGFQYIDIPACIPSGQYLLRAEMIALHAASSTAGAQLYMECAQINIVGGTGGTALPSTTYSIPGIYKATDPGLLVNIYSMSPSSTYTIPGPAKFTCPAGNGGGAGGGGSTTTAKPASSTTSKAAITSAVTTLKTSVVAPQPTGGCTAAQWAQCGGMGFSGCTTCASPYTCKKMNDYYSQCS.

Residues 1–15 (MKVLSLLAAASAASA) form the signal peptide. Residues His16 and His96 each contribute to the Cu(2+) site. 2 disulfide bridges follow: Cys54-Cys182 and Cys152-Cys237. O2 contacts are provided by His168 and Gln177. Residues Thr228 and Thr236 are each glycosylated (O-linked (Man...) threonine). A CBM1 domain is found at 286–322 (CTAAQWAQCGGMGFSGCTTCASPYTCKKMNDYYSQCS).

Belongs to the polysaccharide monooxygenase AA9 family. Requires Cu(2+) as cofactor.

It is found in the secreted. The enzyme catalyses [(1-&gt;4)-beta-D-glucosyl]n+m + reduced acceptor + O2 = 4-dehydro-beta-D-glucosyl-[(1-&gt;4)-beta-D-glucosyl]n-1 + [(1-&gt;4)-beta-D-glucosyl]m + acceptor + H2O.. Its function is as follows. Lytic polysaccharide monooxygenase (LPMO) that depolymerizes crystalline and amorphous polysaccharides via the oxidation of scissile alpha- or beta-(1-4)-glycosidic bonds, yielding C4 oxidation products. Catalysis by LPMOs requires the reduction of the active-site copper from Cu(II) to Cu(I) by a reducing agent and H(2)O(2) or O(2) as a cosubstrate. Active on tamarind xyloglucan and konjac glucomannan. This is AA9 family lytic polysaccharide monooxygenase A (gh61-1) from Neurospora crassa (strain ATCC 24698 / 74-OR23-1A / CBS 708.71 / DSM 1257 / FGSC 987).